Here is a 214-residue protein sequence, read N- to C-terminus: MKDYQIEFIEFALEKQVLKFGEFTLKSGRTSPYFFNAGLFNTGRDLARLGRFYAAALEDAAIEYDVLFGPAYKGIPIATTTAVALADHYNKDVPYCFNRKEKKAHGEGGTLVGSELKGKIMLVDDVITAGTAIRESMEIIAENGADLSGVLIALDRQEKGKAELSAIQEVERDFNTKVISIVKLADLISYLESQGTMDQHLASVKAYRDQYGVA.

Position 26 (K26) interacts with 5-phospho-alpha-D-ribose 1-diphosphate. F34 to F35 serves as a coordination point for orotate. 5-phospho-alpha-D-ribose 1-diphosphate-binding positions include Y72–K73, R99, K100, K103, H105, and D124–A132. Positions 128 and 156 each coordinate orotate.

This sequence belongs to the purine/pyrimidine phosphoribosyltransferase family. PyrE subfamily. As to quaternary structure, homodimer. Requires Mg(2+) as cofactor.

It carries out the reaction orotidine 5'-phosphate + diphosphate = orotate + 5-phospho-alpha-D-ribose 1-diphosphate. The protein operates within pyrimidine metabolism; UMP biosynthesis via de novo pathway; UMP from orotate: step 1/2. Its function is as follows. Catalyzes the transfer of a ribosyl phosphate group from 5-phosphoribose 1-diphosphate to orotate, leading to the formation of orotidine monophosphate (OMP). In Pseudoalteromonas translucida (strain TAC 125), this protein is Orotate phosphoribosyltransferase.